The chain runs to 531 residues: T-complex protein 1 subunit zeta (531 aa).

A2 bears the N-acetylalanine mark. K5 is subject to N6-acetyllysine. An ADP-binding site is contributed by G39. G39 serves as a coordination point for ATP. D90 lines the Mg(2+) pocket. ADP is bound by residues G91, T92, T93, S94, T158, and K159. G91, T92, and T93 together coordinate ATP. Position 199 is an N6-acetyllysine (K199). Residue S205 is modified to Phosphoserine. K251 participates in a covalent cross-link: Glycyl lysine isopeptide (Lys-Gly) (interchain with G-Cter in SUMO2). N6-acetyllysine occurs at positions 287, 365, 377, and 388. A411 contributes to the ADP binding site. Positions 411, 412, 496, and 501 each coordinate ATP. D496 lines the ADP pocket.

Belongs to the TCP-1 chaperonin family. In terms of assembly, component of the chaperonin-containing T-complex (TRiC), a hexadecamer composed of two identical back-to-back stacked rings enclosing a protein folding chamber. Each ring is made up of eight different subunits: TCP1/CCT1, CCT2, CCT3, CCT4, CCT5, CCT6A/CCT6, CCT7, CCT8. Interacts with PACRG.

Its subcellular location is the cytoplasm. It catalyses the reaction ATP + H2O = ADP + phosphate + H(+). Its function is as follows. Component of the chaperonin-containing T-complex (TRiC), a molecular chaperone complex that assists the folding of actin, tubulin and other proteins upon ATP hydrolysis. The TRiC complex mediates the folding of WRAP53/TCAB1, thereby regulating telomere maintenance. The polypeptide is T-complex protein 1 subunit zeta (CCT6A) (Bos taurus (Bovine)).